Consider the following 890-residue polypeptide: DNA mismatch repair protein MutS (890 aa).

646–653 (GPNMAGKS) contacts ATP.

It belongs to the DNA mismatch repair MutS family.

Functionally, this protein is involved in the repair of mismatches in DNA. It is possible that it carries out the mismatch recognition step. This protein has a weak ATPase activity. This Hyphomonas neptunium (strain ATCC 15444) protein is DNA mismatch repair protein MutS.